Consider the following 418-residue polypeptide: Tyrosine--tRNA ligase 1 (418 aa).

Tyr-34 contributes to the L-tyrosine binding site. A 'HIGH' region motif is present at residues 39-48 (PTADSLHIGH). The L-tyrosine site is built by Tyr-169 and Gln-173. Positions 230–234 (KFGKT) match the 'KMSKS' region motif. An ATP-binding site is contributed by Lys-233. One can recognise an S4 RNA-binding domain in the interval 352 to 418 (TVLIDLLVES…GKKKYFLIRY (67 aa)).

Belongs to the class-I aminoacyl-tRNA synthetase family. TyrS type 1 subfamily. Homodimer.

The protein resides in the cytoplasm. The catalysed reaction is tRNA(Tyr) + L-tyrosine + ATP = L-tyrosyl-tRNA(Tyr) + AMP + diphosphate + H(+). Functionally, catalyzes the attachment of tyrosine to tRNA(Tyr) in a two-step reaction: tyrosine is first activated by ATP to form Tyr-AMP and then transferred to the acceptor end of tRNA(Tyr). This chain is Tyrosine--tRNA ligase 1, found in Bacillus cereus (strain ATCC 10987 / NRS 248).